We begin with the raw amino-acid sequence, 91 residues long: Small ribosomal subunit protein bS18 (91 aa).

Belongs to the bacterial ribosomal protein bS18 family. As to quaternary structure, part of the 30S ribosomal subunit. Forms a tight heterodimer with protein bS6.

Its function is as follows. Binds as a heterodimer with protein bS6 to the central domain of the 16S rRNA, where it helps stabilize the platform of the 30S subunit. This Syntrophotalea carbinolica (strain DSM 2380 / NBRC 103641 / GraBd1) (Pelobacter carbinolicus) protein is Small ribosomal subunit protein bS18.